A 228-amino-acid polypeptide reads, in one-letter code: Lipoprotein-releasing system ATP-binding protein LolD (228 aa).

In terms of domain architecture, ABC transporter spans 6-228 (LRLSGIEKTY…LSDGRLSAES (223 aa)). Residue 43 to 50 (APSGAGKS) coordinates ATP.

Belongs to the ABC transporter superfamily. Lipoprotein translocase (TC 3.A.1.125) family. As to quaternary structure, the complex is composed of two ATP-binding proteins (LolD) and two transmembrane proteins (LolC and LolE).

It localises to the cell inner membrane. Its function is as follows. Part of the ABC transporter complex LolCDE involved in the translocation of mature outer membrane-directed lipoproteins, from the inner membrane to the periplasmic chaperone, LolA. Responsible for the formation of the LolA-lipoprotein complex in an ATP-dependent manner. The chain is Lipoprotein-releasing system ATP-binding protein LolD from Ruegeria pomeroyi (strain ATCC 700808 / DSM 15171 / DSS-3) (Silicibacter pomeroyi).